A 296-amino-acid polypeptide reads, in one-letter code: Enoyl-CoA hydratase domain-containing protein 2, mitochondrial (296 aa).

The transit peptide at 1 to 17 directs the protein to the mitochondrion; the sequence is MLRVLPRALRLPCSWRF. Lys101 carries the post-translational modification N6-acetyllysine; alternate. N6-succinyllysine; alternate is present on Lys101.

This sequence belongs to the enoyl-CoA hydratase/isomerase family.

Its subcellular location is the mitochondrion. This chain is Enoyl-CoA hydratase domain-containing protein 2, mitochondrial (Echdc2), found in Mus musculus (Mouse).